The chain runs to 78 residues: UPF0349 protein BPUM_2879 (78 aa).

Belongs to the UPF0349 family.

The protein is UPF0349 protein BPUM_2879 of Bacillus pumilus (strain SAFR-032).